We begin with the raw amino-acid sequence, 253 residues long: Histone H1.4 (253 aa).

Residues 1–33 (MSDVAVAADTTETPAAPTKASKATKASKATKAS) show a composition bias toward low complexity. The segment at 1 to 43 (MSDVAVAADTTETPAAPTKASKATKASKATKASKATKAKTTKV) is disordered. S2 is subject to N-acetylserine. Positions 51–127 (AHPPFINMVT…GANGRFRLAE (77 aa)) constitute an H15 domain. Residues 134 to 253 (KSPAAAKKDA…KKAPAAAPEA (120 aa)) are disordered. Basic and acidic residues-rich tracts occupy residues 139 to 149 (AKKDATGEKKA) and 188 to 200 (AAGDKAKKTEVKV). 2 stretches are compositionally biased toward basic residues: residues 201-210 (KKVKSPKKIA) and 234-244 (APKKAAAKPAK).

The protein belongs to the histone H1/H5 family.

The protein localises to the nucleus. It is found in the chromosome. Histones H1 are necessary for the condensation of nucleosome chains into higher-order structures. In Caenorhabditis elegans, this protein is Histone H1.4 (hil-4).